The primary structure comprises 117 residues: Holo-[acyl-carrier-protein] synthase (117 aa).

Residues D6 and E55 each contribute to the Mg(2+) site.

This sequence belongs to the P-Pant transferase superfamily. AcpS family. It depends on Mg(2+) as a cofactor.

Its subcellular location is the cytoplasm. The catalysed reaction is apo-[ACP] + CoA = holo-[ACP] + adenosine 3',5'-bisphosphate + H(+). Functionally, transfers the 4'-phosphopantetheine moiety from coenzyme A to a Ser of acyl-carrier-protein. This Chlorobaculum parvum (strain DSM 263 / NCIMB 8327) (Chlorobium vibrioforme subsp. thiosulfatophilum) protein is Holo-[acyl-carrier-protein] synthase.